Reading from the N-terminus, the 151-residue chain is MERPEHELIRQSWRAVSRSPLEHGTVLFARLFDLEPDLLPLFQYNCRQFSSPEDCLSSPEFLDHIRKVMLVIDAAVTNVEDLSSLEEYLAGLGRKHRAVGVKLSSFSAVGESLLYMLEKCLGPTFTPATRAAWSQLYGAVVQAMSRGWNGE.

In terms of domain architecture, Globin spans 1 to 149; that stretch reads MERPEHELIR…VVQAMSRGWN (149 aa). Positions 64 and 96 each coordinate heme b.

The protein belongs to the globin family. Monomer. Homodimer and homotetramer; disulfide-linked. Mainly monomeric but also detected as part of homodimers and homotetramers. Interacts with 14-3-3 proteins; regulates the phosphorylation of NGB. Could interact (ferrous form) with G-alpha(i) proteins (GTP-bound form). Post-translationally, phosphorylated during hypoxia by ERK1/ERK2. Phosphorylation regulates the heme pocket hexacoordination preventing the association of His-64 with the heme metal center. Thereby, promotes the access of dioxygen and nitrite to the heme and stimulates the nitrite reductase activity. Phosphorylation during hypoxia is stabilized by 14-3-3 proteins.

It is found in the cytoplasm. The protein resides in the cytosol. The protein localises to the mitochondrion matrix. The catalysed reaction is Fe(III)-heme b-[protein] + nitric oxide + H2O = Fe(II)-heme b-[protein] + nitrite + 2 H(+). Its function is as follows. Monomeric globin with a bis-histidyl six-coordinate heme-iron atom through which it can bind dioxygen, carbon monoxide and nitric oxide. Could help transport oxygen and increase its availability to the metabolically active neuronal tissues, though its low quantity in tissues as well as its high affinity for dioxygen, which may limit its oxygen-releasing ability, argue against it. The ferrous/deoxygenated form exhibits a nitrite reductase activity and it could produce nitric oxide which in turn inhibits cellular respiration in response to hypoxia. In its ferrous/deoxygenated state, it may also exhibit GDI (Guanine nucleotide Dissociation Inhibitor) activity toward heterotrimeric G-alpha proteins, thereby regulating signal transduction to facilitate neuroprotective responses in the wake of hypoxia and associated oxidative stress. The protein is Neuroglobin of Sus scrofa (Pig).